A 429-amino-acid polypeptide reads, in one-letter code: MPIIEQVGAREILDSRGNPTVEVEVGLLDGTVSRAAVPSGASTGEHEAVELRDGGSRYLGKGVEKAVEAVLDEIAPAVIGLGADEQRLVDQALVDLDGTPDKSRLGANAILGVSLAVAKAAAQSAELPLFRYVGGPNAHILPVPMMNIINGGAHADTGVDVQEFMIAPIGAPSFKEALRWGAEVYHSLKSVLKKQGLATGLGDEGGFAPDLPGTRAALDLIGTAIEAAGLKVGSDVALALDVAATEFYTEGTGYAFEKETRTAEQMAAFYAQLLEAYPLVSIEDPLSEDDWDGWVALTAAIGDKVQLVGDDLFVTNPERLEDGIERGAANALLVKVNQIGTLTETLDAVSLAHNAGYKTMMSHRSGETEDTTIADLAVAVGSGQIKTGAPARSERVAKYNQLLRIEEELGDAARYAGDLAFPRFSVETK.

Gln-162 contributes to the (2R)-2-phosphoglycerate binding site. Glu-204 serves as the catalytic Proton donor. The Mg(2+) site is built by Asp-241, Glu-283, and Asp-310. Residues Lys-335, Arg-364, Ser-365, and Lys-386 each contribute to the (2R)-2-phosphoglycerate site. Lys-335 serves as the catalytic Proton acceptor.

This sequence belongs to the enolase family. Requires Mg(2+) as cofactor.

It is found in the cytoplasm. It localises to the secreted. The protein localises to the cell surface. The catalysed reaction is (2R)-2-phosphoglycerate = phosphoenolpyruvate + H2O. Its pathway is carbohydrate degradation; glycolysis; pyruvate from D-glyceraldehyde 3-phosphate: step 4/5. Catalyzes the reversible conversion of 2-phosphoglycerate (2-PG) into phosphoenolpyruvate (PEP). It is essential for the degradation of carbohydrates via glycolysis. The chain is Enolase from Mycolicibacterium vanbaalenii (strain DSM 7251 / JCM 13017 / BCRC 16820 / KCTC 9966 / NRRL B-24157 / PYR-1) (Mycobacterium vanbaalenii).